The following is a 96-amino-acid chain: uncharacterized protein (96 aa).

Transmembrane regions (helical) follow at residues Leu27 to Ile47 and Leu50 to Phe70.

Its subcellular location is the cell membrane. This is an uncharacterized protein from Haemophilus influenzae (strain ATCC 51907 / DSM 11121 / KW20 / Rd).